Consider the following 720-residue polypeptide: ABC transporter G family member STR2 (720 aa).

Topologically, residues Met1–Glu467 are cytoplasmic. The ABC transporter domain maps to Leu25–Lys274. Gly70–Ser77 contributes to the ATP binding site. Positions Gly313–Gln346 are disordered. A compositionally biased stretch (basic and acidic residues) spans Ser327–Gln346. The helical transmembrane segment at Leu468 to Met488 threads the bilayer. Residues His489–Ser502 are Extracellular-facing. Residues Phe503–Ile523 form a helical membrane-spanning segment. At Gln524–Gly547 the chain is on the cytoplasmic side. Residues Leu548–Phe568 traverse the membrane as a helical segment. Residues Ala569–Pro575 lie on the Extracellular side of the membrane. A helical transmembrane segment spans residues Phe576–Phe596. Residues Val597 to Tyr604 lie on the Cytoplasmic side of the membrane. A helical membrane pass occupies residues Ile605–Phe625. The Extracellular segment spans residues Leu626–Val693. A glycan (N-linked (GlcNAc...) asparagine) is linked at Asn681. Residues Tyr694–Phe714 form a helical membrane-spanning segment. Topologically, residues Ser715 to Thr720 are cytoplasmic.

This sequence belongs to the ABC transporter superfamily. ABCG family. Stunted arbuscule (STR) subfamily. Heterodimerizes with STR; the resulting transporter is located in the peri-arbuscular membrane.

It is found in the cell membrane. Together with STR, required for arbuscule development in arbuscular mycorrhizal (AM) symbiosis. In Petunia hybrida (Petunia), this protein is ABC transporter G family member STR2.